Reading from the N-terminus, the 784-residue chain is MHTRVLHVLEFDKVKEQLLEHVSSSLGKEKVEKLFPSSHFAEVTNWQEETDEAVAALRLRGHVPLGGIFDIRASLKRAKIGGTLSPHELLDIASTISASRQLKQFIESLHEEKEEFPHLAGYAEKLAALPEVQQAIERCIDDHGEVMDHASERLRSIRQQLRTTEARVREKLENIIRSQSAQKMLSDAIITIRNDRYVIPVKQEYRGVYGGIVHDQSASGATLFIEPQAVVELNNQLQEARVKEKREIERILTELTSIVAEHAEALLENVDILAQLDFIFAKAKYANKLKATKPVMNDRGYIRLLQARHPLIDQDVVVPNDIELGKDYTTIVITGPNTGGKTVTLKTIGLLTLMAQAGLFIPALDGSELAVFRSVYADIGDEQSIEQSLSTFSSHMVNIVDILRNVDHESLVLFDELGAGTDPQEGAALAIAILDEVHGRGARTVATTHYPELKAYGYNRDGVINASVEFDTETLRPTYKLLIGIPGRSNAFEISKRLGLDERIIERAKSHISAESNKVENMIASLEQSKKRAEEEEKKAKEARMEAEKLRSDWEQKWEELHEKRDEIIEEAKRKAADIVRASQQEAERIIRELRRMQKEKQAEIKEHELIEAKKRLEEAIPTLEKKKKERKKQTQHAFQPGDEVKVTSLNQKGYLVEKVSDDEWQVQLGILKMKINERDLEYIGSAPKTETKPLATVKGKDYHVGLELDLRGERYEDAIVRLEKYIDDALLAGYPRVSIIHGKGTGALRKGVQEFLKKHRSVKNFHFGEANEGGTGVTIVELK.

335 to 342 (GPNTGGKT) is a binding site for ATP. The 76-residue stretch at 709–784 (LDLRGERYED…GTGVTIVELK (76 aa)) folds into the Smr domain.

The protein belongs to the DNA mismatch repair MutS family. MutS2 subfamily. Homodimer. Binds to stalled ribosomes, contacting rRNA.

Its function is as follows. Endonuclease that is involved in the suppression of homologous recombination and thus may have a key role in the control of bacterial genetic diversity. Acts as a ribosome collision sensor, splitting the ribosome into its 2 subunits. Detects stalled/collided 70S ribosomes which it binds and splits by an ATP-hydrolysis driven conformational change. Acts upstream of the ribosome quality control system (RQC), a ribosome-associated complex that mediates the extraction of incompletely synthesized nascent chains from stalled ribosomes and their subsequent degradation. Probably generates substrates for RQC. The sequence is that of Endonuclease MutS2 from Geobacillus sp. (strain WCH70).